The following is a 156-amino-acid chain: Small ribosomal subunit protein uS7 (156 aa).

It belongs to the universal ribosomal protein uS7 family. As to quaternary structure, part of the 30S ribosomal subunit. Contacts proteins S9 and S11.

Its function is as follows. One of the primary rRNA binding proteins, it binds directly to 16S rRNA where it nucleates assembly of the head domain of the 30S subunit. Is located at the subunit interface close to the decoding center, probably blocks exit of the E-site tRNA. This Mycobacterium tuberculosis (strain CDC 1551 / Oshkosh) protein is Small ribosomal subunit protein uS7.